We begin with the raw amino-acid sequence, 188 residues long: MAIIGILGTPYNTVERSPFWWNKVSYTRQSFIDVFQELGHTVIVLPVDKTENIKNYLPLVDKIVLTGGVDVSPYLYGEEPHAQLGTTDPIRDRFELAAIKAALEANKPILGVCRGLQLLNVYFGGTLYQDLSLTSSQIKHLQSPTPQEVPTHHISVEKEDSFRFLPENYMVNSFHHQVIKDLGQGLQA.

In terms of domain architecture, Glutamine amidotransferase type-1 spans Ser-17–Ala-188.

The chain is Putative glutamine amidotransferase-like protein YvdE homolog from Lactococcus lactis subsp. cremoris (Streptococcus cremoris).